A 256-amino-acid chain; its full sequence is Triosephosphate isomerase (256 aa).

10-12 contributes to the substrate binding site; it reads NWK. His-99 (electrophile) is an active-site residue. Catalysis depends on Glu-171, which acts as the Proton acceptor. Residues Gly-177, Ser-216, and 237-238 each bind substrate; that span reads GG.

The protein belongs to the triosephosphate isomerase family. As to quaternary structure, homodimer.

The protein resides in the cytoplasm. It carries out the reaction D-glyceraldehyde 3-phosphate = dihydroxyacetone phosphate. It participates in carbohydrate biosynthesis; gluconeogenesis. It functions in the pathway carbohydrate degradation; glycolysis; D-glyceraldehyde 3-phosphate from glycerone phosphate: step 1/1. In terms of biological role, involved in the gluconeogenesis. Catalyzes stereospecifically the conversion of dihydroxyacetone phosphate (DHAP) to D-glyceraldehyde-3-phosphate (G3P). The chain is Triosephosphate isomerase from Colwellia psychrerythraea (strain 34H / ATCC BAA-681) (Vibrio psychroerythus).